A 163-amino-acid chain; its full sequence is Neurotrophin-3 (163 aa).

An N-terminal signal peptide occupies residues 1–3 (IQS). The propeptide occupies 4–119 (TSMDQGILTE…ALNRTSRRKR (116 aa)). Disordered stretches follow at residues 38–60 (ARTKDGTQTTVKKSEAEADATAS) and 90–131 (LLSE…YSVC). Residue Asn112 is glycosylated (N-linked (GlcNAc...) asparagine).

Belongs to the NGF-beta family.

It localises to the secreted. Seems to promote the survival of visceral and proprioceptive sensory neurons. This chain is Neurotrophin-3 (NTF3), found in Eunectes notaeus (Yellow anaconda).